The chain runs to 565 residues: Liver carboxylesterase 1 (565 aa).

Positions 1 to 18 are cleaved as a signal peptide; the sequence is MWLCALALASLAACTAWG. The N-linked (GlcNAc...) asparagine glycan is linked to Asn79. A disulfide bridge connects residues Cys87 and Cys116. Ser221 (acyl-ester intermediate) is an active-site residue. The cysteines at positions 273 and 284 are disulfide-linked. Glu353 (charge relay system) is an active-site residue. Asn389 carries N-linked (GlcNAc...) asparagine glycosylation. His467 acts as the Charge relay system in catalysis. Leu565 is a short sequence motif (prevents secretion from ER).

The protein belongs to the type-B carboxylesterase/lipase family. As to quaternary structure, monomer.

It localises to the endoplasmic reticulum lumen. The catalysed reaction is a carboxylic ester + H2O = an alcohol + a carboxylate + H(+). In terms of biological role, involved in the detoxification of xenobiotics and in the activation of ester and amide prodrugs. The polypeptide is Liver carboxylesterase 1 (Oryctolagus cuniculus (Rabbit)).